A 523-amino-acid polypeptide reads, in one-letter code: F-box only protein 31-B (523 aa).

The F-box domain maps to 59 to 105; it reads PRSLLQLPPEILVEIFSSLPGTELPSLAQVCRKFRQILTTDTIWKRR. Positions 201, 209, 225, and 231 each coordinate Zn(2+). The segment at 372 to 427 is disordered; that stretch reads IQREQRQTGNEEDDGKGAGPDRAEHSQQPAPVHRPAKEDVNGVDNADDREQKPPNV. Composition is skewed to basic and acidic residues over residues 386–396 and 406–423; these read GKGAGPDRAEH and PAKEDVNGVDNADDREQK.

It belongs to the FBXO31 family. In terms of assembly, part of a SCF (SKP1-cullin-F-box) protein ligase complex SCF(FBXO31).

The protein resides in the cytoplasm. Its pathway is protein modification; protein ubiquitination. Substrate-recognition component of the SCF(FBXO31) protein ligase complex, which specifically mediates the ubiquitination of proteins amidated at their C-terminus in response to oxidative stress, leading to their degradation by the proteasome. Fbxo31 specifically recognizes and binds C-terminal peptides bearing an amide: C-terminal amidation in response to oxidative stress takes place following protein fragmentation. The SCF(FBXO31) also plays a role in G1 arrest following DNA damage by mediating ubiquitination of phosphorylated cyclin-D1 (ccnd1), promoting its degradation by the proteasome, resulting in G1 arrest. The SCF(FBXO31) complex is however not a major regulator of ccnd1 stability during the G1/S transition. This Xenopus laevis (African clawed frog) protein is F-box only protein 31-B (fbxo31-b).